A 356-amino-acid polypeptide reads, in one-letter code: Nicotinate-nucleotide--dimethylbenzimidazole phosphoribosyltransferase (356 aa).

Glu317 (proton acceptor) is an active-site residue.

This sequence belongs to the CobT family. Homodimer.

It catalyses the reaction 5,6-dimethylbenzimidazole + nicotinate beta-D-ribonucleotide = alpha-ribazole 5'-phosphate + nicotinate + H(+). It functions in the pathway nucleoside biosynthesis; alpha-ribazole biosynthesis; alpha-ribazole from 5,6-dimethylbenzimidazole: step 1/2. Its function is as follows. Catalyzes the synthesis of alpha-ribazole-5'-phosphate from nicotinate mononucleotide (NAMN) and 5,6-dimethylbenzimidazole (DMB). The protein is Nicotinate-nucleotide--dimethylbenzimidazole phosphoribosyltransferase of Salmonella paratyphi A (strain AKU_12601).